We begin with the raw amino-acid sequence, 336 residues long: Tryptophan--tRNA ligase (336 aa).

Residues T11–T13 and G19–N20 contribute to the ATP site. Positions T12–N20 match the 'HIGH' region motif. An L-tryptophan-binding site is contributed by D145. ATP contacts are provided by residues G157–D159, L196, and K203–S207. The 'KMSKS' region motif lies at K203–S207.

It belongs to the class-I aminoacyl-tRNA synthetase family. As to quaternary structure, homodimer.

It localises to the cytoplasm. The catalysed reaction is tRNA(Trp) + L-tryptophan + ATP = L-tryptophyl-tRNA(Trp) + AMP + diphosphate + H(+). Functionally, catalyzes the attachment of tryptophan to tRNA(Trp). The sequence is that of Tryptophan--tRNA ligase from Neisseria meningitidis serogroup A / serotype 4A (strain DSM 15465 / Z2491).